The chain runs to 182 residues: ATP synthase subunit delta (182 aa).

Belongs to the ATPase delta chain family. F-type ATPases have 2 components, F(1) - the catalytic core - and F(0) - the membrane proton channel. F(1) has five subunits: alpha(3), beta(3), gamma(1), delta(1), epsilon(1). CF(0) has four main subunits: a(1), b(1), b'(1) and c(10-14). The alpha and beta chains form an alternating ring which encloses part of the gamma chain. F(1) is attached to F(0) by a central stalk formed by the gamma and epsilon chains, while a peripheral stalk is formed by the delta, b and b' chains.

The protein resides in the cellular thylakoid membrane. In terms of biological role, f(1)F(0) ATP synthase produces ATP from ADP in the presence of a proton or sodium gradient. F-type ATPases consist of two structural domains, F(1) containing the extramembraneous catalytic core and F(0) containing the membrane proton channel, linked together by a central stalk and a peripheral stalk. During catalysis, ATP synthesis in the catalytic domain of F(1) is coupled via a rotary mechanism of the central stalk subunits to proton translocation. Functionally, this protein is part of the stalk that links CF(0) to CF(1). It either transmits conformational changes from CF(0) to CF(1) or is implicated in proton conduction. The protein is ATP synthase subunit delta of Synechococcus sp. (strain JA-2-3B'a(2-13)) (Cyanobacteria bacterium Yellowstone B-Prime).